The chain runs to 219 residues: MTATKATSDQPLFGRPWIFIRGVPSMKFLPPEGPLEIAFAGRSNVGKSSLINALVGQKGLARTSNTPGRTQELNYFVPEGYSGEGDDLPPMALVDMPGYGYAKAPKDHVDAWTKLVFDYLRGRATLKRVYLLIDSRHGIKANDEDVLTLLDKAAMSYQIVLTKTDKIKEAGVPRLIEETLEKIRKRPAAYPFVLSTSSEKDKGLKELRAAICETVGHFG.

The 185-residue stretch at 33–217 folds into the EngB-type G domain; that stretch reads GPLEIAFAGR…RAAICETVGH (185 aa). Residues 41–48, 68–72, 95–98, 162–165, and 196–198 each bind GTP; these read GRSNVGKS, GRTQE, DMPG, TKTD, and TSS. 2 residues coordinate Mg(2+): S48 and T70.

It belongs to the TRAFAC class TrmE-Era-EngA-EngB-Septin-like GTPase superfamily. EngB GTPase family. Requires Mg(2+) as cofactor.

Functionally, necessary for normal cell division and for the maintenance of normal septation. This chain is Probable GTP-binding protein EngB, found in Allorhizobium ampelinum (strain ATCC BAA-846 / DSM 112012 / S4) (Agrobacterium vitis (strain S4)).